The chain runs to 428 residues: 3-phosphoshikimate 1-carboxyvinyltransferase (428 aa).

Residues lysine 21, serine 22, and arginine 26 each coordinate 3-phosphoshikimate. Lysine 21 is a binding site for phosphoenolpyruvate. Phosphoenolpyruvate contacts are provided by glycine 91 and arginine 119. Residues serine 164, glutamine 166, aspartate 313, and lysine 340 each coordinate 3-phosphoshikimate. Glutamine 166 lines the phosphoenolpyruvate pocket. Aspartate 313 functions as the Proton acceptor in the catalytic mechanism. Arginine 344 and arginine 386 together coordinate phosphoenolpyruvate.

Belongs to the EPSP synthase family. As to quaternary structure, monomer.

The protein resides in the cytoplasm. The enzyme catalyses 3-phosphoshikimate + phosphoenolpyruvate = 5-O-(1-carboxyvinyl)-3-phosphoshikimate + phosphate. It functions in the pathway metabolic intermediate biosynthesis; chorismate biosynthesis; chorismate from D-erythrose 4-phosphate and phosphoenolpyruvate: step 6/7. In terms of biological role, catalyzes the transfer of the enolpyruvyl moiety of phosphoenolpyruvate (PEP) to the 5-hydroxyl of shikimate-3-phosphate (S3P) to produce enolpyruvyl shikimate-3-phosphate and inorganic phosphate. The polypeptide is 3-phosphoshikimate 1-carboxyvinyltransferase (Campylobacter jejuni subsp. jejuni serotype O:6 (strain 81116 / NCTC 11828)).